Consider the following 124-residue polypeptide: Alpha-amylase inhibitor 0.53 (124 aa).

Disulfide bonds link C20/C41, C28/C83, C42/C99, and C54/C115.

Belongs to the protease inhibitor I6 (cereal trypsin/alpha-amylase inhibitor) family. In terms of assembly, homodimer. The disulfide bonds are essential for the inhibitor activity. In terms of tissue distribution, endosperm.

Its subcellular location is the secreted. Its function is as follows. Alpha-amylase inhibitor. This chain is Alpha-amylase inhibitor 0.53, found in Triticum aestivum (Wheat).